Here is a 481-residue protein sequence, read N- to C-terminus: Mechanosensory protein 2 (481 aa).

Positions Met-1–Lys-22 are enriched in low complexity. Disordered regions lie at residues Met-1 to Arg-67 and Ser-80 to Lys-104. Over residues Leu-27–Gln-38 the composition is skewed to polar residues. The segment covering Asp-86 to Lys-104 has biased composition (basic and acidic residues). Residues Gly-115–Ile-135 traverse the membrane as a helical segment. Residues Glu-403–Ser-421 are compositionally biased toward gly residues. The segment at Glu-403–Arg-481 is disordered. Residues Ser-433–Arg-447 are compositionally biased toward low complexity. Positions Ala-463–Gln-473 are enriched in polar residues.

It belongs to the band 7/mec-2 family. As to quaternary structure, component of a non-voltage-gated amiloride-sensitive cation channel complex (also called the degenerin channel complex) composed of at least the mec-2, mec-4, mec-6 and mec-10 subunits; the complex mediates mechanotransduction in touch cells. Interacts with mec-6 and mec-4.

It localises to the membrane. In terms of biological role, subunit of an amiloride-sensitive cation channel (degenerin channel complex) permeable for sodium, potassium, lithium and N-methylglucamine, and required for mechanosensory transduction (touch sensitivity). Positively regulates the activity of the putative mechanosensory transduction channel. May link the mechanosensory channel and the microtubule cytoskeleton of the touch receptor neurons. Required for the function of a set of six touch receptor neurons. The polypeptide is Mechanosensory protein 2 (Caenorhabditis elegans).